The primary structure comprises 155 residues: Small ribosomal subunit protein uS7 (155 aa).

Belongs to the universal ribosomal protein uS7 family. Part of the 30S ribosomal subunit. Contacts proteins S9 and S11.

In terms of biological role, one of the primary rRNA binding proteins, it binds directly to 16S rRNA where it nucleates assembly of the head domain of the 30S subunit. Is located at the subunit interface close to the decoding center, probably blocks exit of the E-site tRNA. This is Small ribosomal subunit protein uS7 from Sulfurovum sp. (strain NBC37-1).